The chain runs to 267 residues: Undecaprenyl-diphosphatase (267 aa).

Transmembrane regions (helical) follow at residues 1–21, 39–59, 83–103, 111–131, 149–169, 189–209, 218–238, and 245–265; these read MSYFESFILALIQGFTEFLPI, QGLAFDVAVHVGTLAAVVLYF, AKLAWLIVLATIPACLFGFVM, LRSAWVIATTTIVFGLLLWYV, ALFIGLAQAVAIIPGTSRSGA, FLMSIPIIVLAGSYLGLKLVT, FLLTGIITSFISAYICIHFFL, and GMTPFVIYRLVLGVGLFAFLL.

The protein belongs to the UppP family.

The protein resides in the cell inner membrane. It catalyses the reaction di-trans,octa-cis-undecaprenyl diphosphate + H2O = di-trans,octa-cis-undecaprenyl phosphate + phosphate + H(+). Its function is as follows. Catalyzes the dephosphorylation of undecaprenyl diphosphate (UPP). Confers resistance to bacitracin. This chain is Undecaprenyl-diphosphatase, found in Vibrio cholerae serotype O1 (strain ATCC 39315 / El Tor Inaba N16961).